A 561-amino-acid polypeptide reads, in one-letter code: Cloacin (561 aa).

Gly residues-rich tracts occupy residues 1–21 (MSGG…GGQA), 29–40 (SGKGGPSSGGGT), and 66–91 (FGNG…GGGQ). Disordered stretches follow at residues 1-93 (MSGG…GQSS), 254-273 (PKGI…TAGG), 304-326 (VKQR…PEEG), 432-507 (KAAL…KRAR), and 530-561 (RASD…KKYL). An involved in the translocation of the protein across the cell membrane region spans residues 1-180 (MSGGDGRGPG…DTVTETPAST (180 aa)). Residues 200-420 (DERQHIAVVA…NAKLKAAQAS (221 aa)) form a responsible for the receptor binding activity region. 2 stretches are compositionally biased toward basic and acidic residues: residues 306–326 (QRQE…PEEG) and 440–494 (ESRK…EGKP). Positions 421-561 (LNAMNDALSR…DPKRNIKKYL (141 aa)) are ribonuclease activity. A binding of immunity protein region spans residues 540–561 (FDPKTGKQVKGPDPKRNIKKYL).

This sequence belongs to the cloacin colicin family.

Inactivates ribosomes by hydrolyzing 16S RNA in 30S ribosomes at a specific site. Functionally, colicins are polypeptide toxins produced by and active against E.coli and closely related bacteria. This chain is Cloacin (ccl), found in Escherichia coli.